Here is a 619-residue protein sequence, read N- to C-terminus: Serine/threonine-protein kinase pkn1 (619 aa).

The Protein kinase domain occupies 15-302 (YRILYRKGQS…SSQNLPQAVL (288 aa)). 21-29 (KGQSLWSED) provides a ligand contact to ATP. Glu-141 (proton acceptor) is an active-site residue.

The protein belongs to the protein kinase superfamily. Ser/Thr protein kinase family. Autophosphorylated on serine and threonine residues.

The enzyme catalyses L-seryl-[protein] + ATP = O-phospho-L-seryl-[protein] + ADP + H(+). It carries out the reaction L-threonyl-[protein] + ATP = O-phospho-L-threonyl-[protein] + ADP + H(+). Together with the serine/threonine kinase PknD, may play a role in the specific interactions with host proteins during intracellular growth. This chain is Serine/threonine-protein kinase pkn1 (pkn1), found in Chlamydia pneumoniae (Chlamydophila pneumoniae).